Consider the following 178-residue polypeptide: Ribosome maturation factor RimM (178 aa).

Residues 101–178 (ADEYYWYQLV…VMRVEWDADF (78 aa)) form the PRC barrel domain.

Belongs to the RimM family. In terms of assembly, binds ribosomal protein uS19.

Its subcellular location is the cytoplasm. An accessory protein needed during the final step in the assembly of 30S ribosomal subunit, possibly for assembly of the head region. Essential for efficient processing of 16S rRNA. May be needed both before and after RbfA during the maturation of 16S rRNA. It has affinity for free ribosomal 30S subunits but not for 70S ribosomes. The protein is Ribosome maturation factor RimM of Pseudomonas putida (strain ATCC 47054 / DSM 6125 / CFBP 8728 / NCIMB 11950 / KT2440).